A 405-amino-acid chain; its full sequence is MKRTFIMMLDSFGIGAAADAEAFGDTGSDTFGNIAKACAEGKANEGREGPLKLPNLARLGLAQASKESTGQLPAGFSDDVEIIGAYGHADELSTGKDTPSGHWELAGVPVLYEWGYFSDHTNSFPKELTDKILARAGLSDYLGNCHASGTAILEELGNEHMTSGLPIFYTSADSVFQVACHEETFGLENLYTLCQIVREELEPYNIGRVIARPFVGTGPSDFARTGNRRDYAVEPPAKTVLDKLKDSGGEVVSVGKIADIYAHCGITKKIKASGLEALFDATLEELKVAGDNTIVFTNFVDFDSHFGHRRDVAGYARSLEYFDSRLPELMALMGEDDLLLLTADHGCDPTWPGTDHTRERVPVLAYGAGLEAGSLGRRKSFADMGQSIASYFKLEPMEYGESFIK.

6 residues coordinate Mn(2+): Asp-10, Asp-303, His-308, Asp-344, His-345, and His-356.

The protein belongs to the phosphopentomutase family. It depends on Mn(2+) as a cofactor.

The protein resides in the cytoplasm. It carries out the reaction 2-deoxy-alpha-D-ribose 1-phosphate = 2-deoxy-D-ribose 5-phosphate. The enzyme catalyses alpha-D-ribose 1-phosphate = D-ribose 5-phosphate. It functions in the pathway carbohydrate degradation; 2-deoxy-D-ribose 1-phosphate degradation; D-glyceraldehyde 3-phosphate and acetaldehyde from 2-deoxy-alpha-D-ribose 1-phosphate: step 1/2. Its function is as follows. Isomerase that catalyzes the conversion of deoxy-ribose 1-phosphate (dRib-1-P) and ribose 1-phosphate (Rib-1-P) to deoxy-ribose 5-phosphate (dRib-5-P) and ribose 5-phosphate (Rib-5-P), respectively. This is Phosphopentomutase from Shewanella sediminis (strain HAW-EB3).